The chain runs to 441 residues: Nucleoprotein (441 aa).

Ser5 carries the post-translational modification Phosphoserine; by host. Positions 14 to 136 constitute a CoV N NTD domain; it reads VPLSLYAPLR…QLPSVVEIVE (123 aa). The RNA-binding stretch occupies residues 16–146; the sequence is LSLYAPLRVT…PNTPPASRAN (131 aa). Disordered stretches follow at residues 131–219 and 231–278; these read VVEI…VTSR and KSLG…LKDI. Residue Ser143 is modified to Phosphoserine; by host. Residues 143-215 are compositionally biased toward low complexity; that stretch reads SRANSRSRSR…NRNQSNDRGG (73 aa). Basic and acidic residues-rich tracts occupy residues 238–255 and 269–278; these read NPDR…KSDN and TSKERDLKDI. The CoV N CTD domain maps to 266-382; sequence SRATSKERDL…AFKTGNAKLQ (117 aa). The dimerization stretch occupies residues 277-379; the sequence is DIPEWRRIPK…QVDAFKTGNA (103 aa).

The protein belongs to the alphacoronavirus nucleocapsid protein family. Homooligomer. Both monomeric and oligomeric forms interact with RNA. Interacts with protein M. Interacts with NSP3; this interaction serves to tether the genome to the newly translated replicase-transcriptase complex at a very early stage of infection. Interacts with host RSAD2; this interaction inhibits viral replication. In terms of processing, ADP-ribosylated. The ADP-ribosylation is retained in the virion during infection. Phosphorylated on serine and threonine residues.

Its subcellular location is the virion. The protein localises to the host endoplasmic reticulum-Golgi intermediate compartment. It localises to the host Golgi apparatus. In terms of biological role, packages the positive strand viral genome RNA into a helical ribonucleocapsid (RNP) and plays a fundamental role during virion assembly through its interactions with the viral genome and membrane protein M. Plays an important role in enhancing the efficiency of subgenomic viral RNA transcription as well as viral replication. This is Nucleoprotein from Porcine epidemic diarrhea virus (strain CV777) (PEDV).